The primary structure comprises 248 residues: Aspartate/glutamate leucyltransferase (248 aa).

The protein belongs to the R-transferase family. Bpt subfamily.

It localises to the cytoplasm. It catalyses the reaction N-terminal L-glutamyl-[protein] + L-leucyl-tRNA(Leu) = N-terminal L-leucyl-L-glutamyl-[protein] + tRNA(Leu) + H(+). The catalysed reaction is N-terminal L-aspartyl-[protein] + L-leucyl-tRNA(Leu) = N-terminal L-leucyl-L-aspartyl-[protein] + tRNA(Leu) + H(+). Its function is as follows. Functions in the N-end rule pathway of protein degradation where it conjugates Leu from its aminoacyl-tRNA to the N-termini of proteins containing an N-terminal aspartate or glutamate. In Methylobacterium sp. (strain 4-46), this protein is Aspartate/glutamate leucyltransferase.